The following is a 370-amino-acid chain: tRNA-specific 2-thiouridylase MnmA (370 aa).

ATP contacts are provided by residues 11–18 (GMSGGVDS) and Met37. The interval 97–99 (NPD) is interaction with target base in tRNA. The Nucleophile role is filled by Cys102. An intrachain disulfide couples Cys102 to Cys199. Position 126 (Gly126) interacts with ATP. The interaction with tRNA stretch occupies residues 149 to 151 (KDQ). Cys199 serves as the catalytic Cysteine persulfide intermediate. The tract at residues 307 to 308 (RY) is interaction with tRNA.

This sequence belongs to the MnmA/TRMU family.

Its subcellular location is the cytoplasm. The catalysed reaction is S-sulfanyl-L-cysteinyl-[protein] + uridine(34) in tRNA + AH2 + ATP = 2-thiouridine(34) in tRNA + L-cysteinyl-[protein] + A + AMP + diphosphate + H(+). In terms of biological role, catalyzes the 2-thiolation of uridine at the wobble position (U34) of tRNA, leading to the formation of s(2)U34. The protein is tRNA-specific 2-thiouridylase MnmA of Staphylococcus haemolyticus (strain JCSC1435).